Here is a 581-residue protein sequence, read N- to C-terminus: Kelch-like protein 38 (581 aa).

Residues Thr-34–Thr-101 enclose the BTB domain. The BACK domain maps to Cys-136–Ala-237. 6 Kelch repeats span residues Phe-285–Arg-332, Ile-334–Asn-383, Phe-384–Gln-431, Leu-433–Glu-479, Arg-480–Asn-521, and Leu-523–Cys-573.

The chain is Kelch-like protein 38 (KLHL38) from Homo sapiens (Human).